Consider the following 156-residue polypeptide: Putative NrdI-like protein (156 aa).

The chain is Putative NrdI-like protein from Streptococcus pneumoniae (strain ATCC BAA-255 / R6).